The chain runs to 78 residues: Small integral membrane protein 10-like protein 2A (78 aa).

The protein is Small integral membrane protein 10-like protein 2A of Homo sapiens (Human).